The chain runs to 131 residues: UPF0102 protein AZC_4471 (131 aa).

Belongs to the UPF0102 family.

The polypeptide is UPF0102 protein AZC_4471 (Azorhizobium caulinodans (strain ATCC 43989 / DSM 5975 / JCM 20966 / LMG 6465 / NBRC 14845 / NCIMB 13405 / ORS 571)).